The chain runs to 153 residues: MKTFSATPADIDKKWILIDAEGVVLGRLASIVATRLRGKHKPSFTPHMDCGDNVVIINADKVQLTGKKREESHYWHTGHPGGIKSRTKAQILEGKHPERIVTLAVKRMLPGNRLSRQIMTNLRVYAGSEHPHEAQSPEVLDVTSMNSKNTRSA.

Positions S128–A153 are disordered. Positions T143–A153 are enriched in polar residues.

Belongs to the universal ribosomal protein uL13 family. Part of the 50S ribosomal subunit.

Functionally, this protein is one of the early assembly proteins of the 50S ribosomal subunit, although it is not seen to bind rRNA by itself. It is important during the early stages of 50S assembly. This Roseobacter denitrificans (strain ATCC 33942 / OCh 114) (Erythrobacter sp. (strain OCh 114)) protein is Large ribosomal subunit protein uL13.